A 341-amino-acid chain; its full sequence is HTH-type transcriptional repressor CytR (341 aa).

Positions 10-64 (ATMKDVALKAKVSTATVSRALMNPDKVSQATRNRVEKAAREVGYLPQPMGRNVKR) constitute an HTH lacI-type domain. A DNA-binding region (H-T-H motif) is located at residues 12 to 31 (MKDVALKAKVSTATVSRALM).

This protein negatively controls the transcription initiation of genes such as deoCABD, udp, and cdd encoding catabolizing enzymes and nupC, nupG, and tsx encoding transporting and pore-forming proteins. Binds cytidine and adenosine as effectors. This chain is HTH-type transcriptional repressor CytR (cytR), found in Escherichia coli (strain K12).